Here is a 131-residue protein sequence, read N- to C-terminus: MATRHQVRQSVVSLLYANEMGSEMEEFSNEFLEEKKIRNDQKSFTLTLYNGVLDNLNLIDEALDAHLGKWKLGEIGAVERAILRLGAYEIKFTNTQSAIVINEAILLANELGSDSSTRFINGVLDAISKVN.

The protein belongs to the NusB family.

In terms of biological role, involved in transcription antitermination. Required for transcription of ribosomal RNA (rRNA) genes. Binds specifically to the boxA antiterminator sequence of the ribosomal RNA (rrn) operons. The sequence is that of Transcription antitermination protein NusB from Campylobacter fetus subsp. fetus (strain 82-40).